Reading from the N-terminus, the 253-residue chain is 23S rRNA (cytidine-2'-O)-methyltransferase TlyA (253 aa).

Residues 1 to 73 form the S4 RNA-binding domain; it reads MRFDFFVSKR…LKLDLLSEIY (73 aa).

The protein belongs to the TlyA family.

It catalyses the reaction cytidine(1920) in 23S rRNA + S-adenosyl-L-methionine = 2'-O-methylcytidine(1920) in 23S rRNA + S-adenosyl-L-homocysteine + H(+). Its function is as follows. Catalyzes the 2'-O-methylation at nucleotide C1920 in 23S rRNA. Enhances motility. Enhances biofilm formation. Involved in the assembly of 70S ribosomes. Involved in virulence by promoting adherence and invasion to host cells. Involved in pathogenicity by modulating secretion of host-protective chemokine interleukin 8 (IL-8). Involved in susceptibility to antibiotic capreomycin. This chain is 23S rRNA (cytidine-2'-O)-methyltransferase TlyA, found in Campylobacter jejuni subsp. jejuni serotype O:23/36 (strain 81-176).